A 453-amino-acid chain; its full sequence is Bifunctional protein GlmU (453 aa).

Residues M1–R226 are pyrophosphorylase. UDP-N-acetyl-alpha-D-glucosamine is bound by residues L8–G11, K22, Q73, G78–T79, Y100–D102, G137, E151, N166, and N224. Mg(2+) is bound at residue D102. Position 224 (N224) interacts with Mg(2+). The linker stretch occupies residues A227–Q247. Residues G248–K453 form an N-acetyltransferase region. The UDP-N-acetyl-alpha-D-glucosamine site is built by R330 and K348. The Proton acceptor role is filled by H360. Y363 and N374 together coordinate UDP-N-acetyl-alpha-D-glucosamine. Residues A377, N383 to Y384, S402, A420, and R437 each bind acetyl-CoA.

This sequence in the N-terminal section; belongs to the N-acetylglucosamine-1-phosphate uridyltransferase family. In the C-terminal section; belongs to the transferase hexapeptide repeat family. As to quaternary structure, homotrimer. It depends on Mg(2+) as a cofactor.

It localises to the cytoplasm. It carries out the reaction alpha-D-glucosamine 1-phosphate + acetyl-CoA = N-acetyl-alpha-D-glucosamine 1-phosphate + CoA + H(+). The catalysed reaction is N-acetyl-alpha-D-glucosamine 1-phosphate + UTP + H(+) = UDP-N-acetyl-alpha-D-glucosamine + diphosphate. Its pathway is nucleotide-sugar biosynthesis; UDP-N-acetyl-alpha-D-glucosamine biosynthesis; N-acetyl-alpha-D-glucosamine 1-phosphate from alpha-D-glucosamine 6-phosphate (route II): step 2/2. It functions in the pathway nucleotide-sugar biosynthesis; UDP-N-acetyl-alpha-D-glucosamine biosynthesis; UDP-N-acetyl-alpha-D-glucosamine from N-acetyl-alpha-D-glucosamine 1-phosphate: step 1/1. It participates in bacterial outer membrane biogenesis; LPS lipid A biosynthesis. Catalyzes the last two sequential reactions in the de novo biosynthetic pathway for UDP-N-acetylglucosamine (UDP-GlcNAc). The C-terminal domain catalyzes the transfer of acetyl group from acetyl coenzyme A to glucosamine-1-phosphate (GlcN-1-P) to produce N-acetylglucosamine-1-phosphate (GlcNAc-1-P), which is converted into UDP-GlcNAc by the transfer of uridine 5-monophosphate (from uridine 5-triphosphate), a reaction catalyzed by the N-terminal domain. The chain is Bifunctional protein GlmU from Vibrio parahaemolyticus serotype O3:K6 (strain RIMD 2210633).